Here is a 473-residue protein sequence, read N- to C-terminus: Eukaryotic translation initiation factor 2 subunit gamma (473 aa).

Residues 40-250 (QATINIGTIG…AICNIAPPNY (211 aa)) enclose the tr-type G domain. The segment at 49 to 56 (GHVAHGKS) is G1. A GTP-binding site is contributed by 52–57 (AHGKSS). The segment at 77-81 (NITIK) is G2. Positions 135–138 (DCPG) are G3. Residues 193 to 196 (NKMD) and 228 to 230 (SAQ) contribute to the GTP site. The segment at 193–196 (NKMD) is G4. The interval 228-230 (SAQ) is G5. The segment at 458–470 (GKVRSGGTLCEVV) is interacts with CDC123.

Belongs to the TRAFAC class translation factor GTPase superfamily. Classic translation factor GTPase family. EIF2G subfamily. As to quaternary structure, eukaryotic translation initiation factor 2 eIF2 is a heterotrimeric complex composed of an alpha, a beta and a gamma subunit. The factors eIF-1, eIF-2, eIF-3, TIF5/eIF-5 and methionyl-tRNAi form a multifactor complex (MFC) that may bind to the 40S ribosome.

Its subcellular location is the cytoplasm. It is found in the cytosol. The catalysed reaction is GTP + H2O = GDP + phosphate + H(+). In terms of biological role, as a subunit of eukaryotic initiation factor 2 eIF2, involved in the early steps of protein synthesis. In the presence of GTP, eIF-2 forms a ternary complex with initiator tRNA Met-tRNAi and then recruits the 40S ribosomal complex and initiation factors eIF-1, eIF-1A and eIF-3 to form the 43S pre-initiation complex (43S PIC), a step that determines the rate of protein translation. The 43S PIC binds to mRNA and scans downstream to the initiation codon, where it forms a 48S initiation complex by codon-anticodon base pairing. This leads to the displacement of eIF-1 to allow GTPase-activating protein (GAP) eIF-5-mediated hydrolysis of eIF2-bound GTP. Hydrolysis of GTP and release of Pi, which makes GTP hydrolysis irreversible, causes the release of the eIF-2-GDP binary complex from the 40S subunit, an event that is essential for the subsequent joining of the 60S ribosomal subunit to form an elongation-competent 80S ribosome. In order for eIF-2 to recycle and catalyze another round of initiation, the GDP bound to eIF-2 must be exchanged with GTP by way of a reaction catalyzed by GDP-GTP exchange factor (GEF) eIF-2B. The protein is Eukaryotic translation initiation factor 2 subunit gamma of Cryptococcus neoformans var. grubii serotype A (strain H99 / ATCC 208821 / CBS 10515 / FGSC 9487) (Filobasidiella neoformans var. grubii).